Here is an 804-residue protein sequence, read N- to C-terminus: Leucine--tRNA ligase (804 aa).

Positions 40–51 (PYPSGQGLHVGH) match the 'HIGH' region motif. The 'KMSKS' region signature appears at 576 to 580 (KMSKS). Lysine 579 contributes to the ATP binding site.

It belongs to the class-I aminoacyl-tRNA synthetase family.

Its subcellular location is the cytoplasm. It carries out the reaction tRNA(Leu) + L-leucine + ATP = L-leucyl-tRNA(Leu) + AMP + diphosphate. This is Leucine--tRNA ligase from Enterococcus faecalis (strain ATCC 700802 / V583).